A 94-amino-acid chain; its full sequence is Progonadoliberin-1 (94 aa).

The first 22 residues, Met-1–Cys-22, serve as a signal peptide directing secretion. The residue at position 23 (Gln-23) is a Pyrrolidone carboxylic acid. Gly-32 is subject to Glycine amide.

This sequence belongs to the GnRH family. In terms of tissue distribution, synthesized in preoptic neurons and is transported to the pituitary in the preoptic-hypophyseal axons.

It is found in the secreted. Stimulates the secretion of gonadotropins. May be responsible for the regulation of the hypothalamic-pituitary-gonadal axis. The protein is Progonadoliberin-1 (gnrh1) of Haplochromis burtoni (Burton's mouthbrooder).